Reading from the N-terminus, the 412-residue chain is 46 kDa FK506-binding nuclear protein (412 aa).

Acidic residues-rich tracts occupy residues 95-113, 169-178, and 188-216; these read EEDL…EEEA, GEDIDTDEND, and EGDD…EEEE. Residues 95–304 form a disordered region; that stretch reads EEDLEDEEEA…PVEKKEKKQI (210 aa). Residues 247-257 are compositionally biased toward basic residues; sequence KSQKRRLKKKL. The span at 271–303 shows a compositional bias: basic and acidic residues; sequence DKPKKEEPQQKAEKKKPEAKKEEAPVEKKEKKQ. Residues 324 to 412 enclose the PPIase FKBP-type domain; it reads GKVVMVYYEG…VFEVDLKNVK (89 aa).

Belongs to the FKBP-type PPIase family. Phosphorylated by a nuclear kinase in the presence of Mg(2+) and ATP.

It localises to the nucleus. It carries out the reaction [protein]-peptidylproline (omega=180) = [protein]-peptidylproline (omega=0). Inhibited by both FK506 and rapamycin. In terms of biological role, PPIases accelerate the folding of proteins. It catalyzes the cis-trans isomerization of proline imidic peptide bonds in oligopeptides. Binds double-stranded DNA in vitro. The chain is 46 kDa FK506-binding nuclear protein (FKBP46) from Spodoptera frugiperda (Fall armyworm).